A 311-amino-acid polypeptide reads, in one-letter code: Probable manganese-dependent inorganic pyrophosphatase (311 aa).

Mn(2+) is bound by residues histidine 9, aspartate 13, aspartate 15, aspartate 75, histidine 97, and aspartate 149.

This sequence belongs to the PPase class C family. Mn(2+) is required as a cofactor.

It is found in the cytoplasm. It catalyses the reaction diphosphate + H2O = 2 phosphate + H(+). In Lactobacillus gasseri (strain ATCC 33323 / DSM 20243 / BCRC 14619 / CIP 102991 / JCM 1131 / KCTC 3163 / NCIMB 11718 / NCTC 13722 / AM63), this protein is Probable manganese-dependent inorganic pyrophosphatase.